An 89-amino-acid polypeptide reads, in one-letter code: Small ribosomal subunit protein uS19 (89 aa).

It belongs to the universal ribosomal protein uS19 family.

Protein S19 forms a complex with S13 that binds strongly to the 16S ribosomal RNA. The polypeptide is Small ribosomal subunit protein uS19 (Bacteroides thetaiotaomicron (strain ATCC 29148 / DSM 2079 / JCM 5827 / CCUG 10774 / NCTC 10582 / VPI-5482 / E50)).